A 618-amino-acid polypeptide reads, in one-letter code: MASLQQSRIQSYLEKNKIGPLFEEMMTKLITETPDHPIPFLIGHLQTKQESPGRIQRTLSGSAALWAEGSSEYKGTRRDSRGYEKPWQIHPKKPKKSKSDLAVSNISPPSPESKSLPRSILRPTWDWRTKPESRGFDELNHILLESKKLGKALENLSRSIAVSDDFDLDPRAYNSVLRPRVVGEWVGREEEDLDPLAAEMFQPPVPRAKTEGWTSKDNSPVGSLKMETKGKGLKQQQQNHKKLLAAMLSQDSFDSMPDSAPSVTEDEMEDEDDAMELLEDLDDLRMEGVTGLLQSGSKFSQGRSSYYTEPQAKVTLNICSRCARLQGDSLTARTEEEPERHVPEQAVPEVPCPLPTVTETLTATEDLQTASQVTGLRHPVWASDVKPIRGTSPQTARRALQLQDSLFSKELENMGKHLAEVEKDLAKLAEQGKLNRSPNSPHRSLLLPPLFHTTNTLPVLGQTSRPQSPSSLSSKTTGLPLHNPKPTSLMTDRTSPSNSSSRAQTPSRPITPNSLMMRSFTAAGHGNKERVYGRSRSRPVTPTGQITRPILTPPGLSTTDLYGGLWSTLTEDEFYQQLQAVRKPWRIPSDAESDCLDPPEQDKCEFYTSDPSHSLKTL.

Disordered regions lie at residues 70 to 118 (SSEY…SLPR), 330 to 352 (LTAR…EVPC), 456 to 552 (TLPV…PILT), and 587 to 618 (IPSD…LKTL). 2 stretches are compositionally biased toward basic and acidic residues: residues 74 to 84 (KGTRRDSRGYE) and 333 to 343 (RTEEEPERHVP). Residues 463 to 481 (TSRPQSPSSLSSKTTGLPL) show a composition bias toward low complexity. Composition is skewed to polar residues over residues 485-516 (KPTS…NSLM) and 609-618 (SDPSHSLKTL).

This is an uncharacterized protein from Danio rerio (Zebrafish).